A 179-amino-acid polypeptide reads, in one-letter code: UPF0302 protein BPUM_1989 (179 aa).

Belongs to the UPF0302 family.

The polypeptide is UPF0302 protein BPUM_1989 (Bacillus pumilus (strain SAFR-032)).